A 487-amino-acid polypeptide reads, in one-letter code: GTPase Der (487 aa).

EngA-type G domains follow at residues 5-169 (PKLA…SREI) and 178-351 (IKVA…ANSQ). Residues 11-18 (GRPNVGKS), 58-62 (DTGGI), 121-124 (NKID), 184-191 (GRANVGKS), 231-235 (DTAGI), and 296-299 (NKWD) each bind GTP. Residues 352 to 439 (KRITTHQLNK…IHLKGKTKKD (88 aa)) form the KH-like domain. The segment at 441-466 (PVSSLSLTRKQTKSTDQENNEYDELY) is disordered.

Belongs to the TRAFAC class TrmE-Era-EngA-EngB-Septin-like GTPase superfamily. EngA (Der) GTPase family. In terms of assembly, associates with the 50S ribosomal subunit.

Functionally, GTPase that plays an essential role in the late steps of ribosome biogenesis. The sequence is that of GTPase Der from Protochlamydia amoebophila (strain UWE25).